A 459-amino-acid chain; its full sequence is Putrescine aminotransferase (459 aa).

Pyridoxal 5'-phosphate is bound by residues 150-151 (GT) and Gln-274. At Lys-300 the chain carries N6-(pyridoxal phosphate)lysine. Residue Thr-332 coordinates pyridoxal 5'-phosphate.

Belongs to the class-III pyridoxal-phosphate-dependent aminotransferase family. Putrescine aminotransferase subfamily. Requires pyridoxal 5'-phosphate as cofactor.

It carries out the reaction an alkane-alpha,omega-diamine + 2-oxoglutarate = an omega-aminoaldehyde + L-glutamate. The enzyme catalyses putrescine + 2-oxoglutarate = 1-pyrroline + L-glutamate + H2O. The catalysed reaction is cadaverine + 2-oxoglutarate = 5-aminopentanal + L-glutamate. It participates in amine and polyamine degradation; putrescine degradation; 4-aminobutanal from putrescine (transaminase route): step 1/1. Its function is as follows. Catalyzes the aminotransferase reaction from putrescine to 2-oxoglutarate, leading to glutamate and 4-aminobutanal, which spontaneously cyclizes to form 1-pyrroline. This is the first step in one of two pathways for putrescine degradation, where putrescine is converted into 4-aminobutanoate (gamma-aminobutyrate or GABA) via 4-aminobutanal. Also functions as a cadaverine transaminase in a a L-lysine degradation pathway to succinate that proceeds via cadaverine, glutarate and L-2-hydroxyglutarate. This chain is Putrescine aminotransferase, found in Escherichia coli O6:H1 (strain CFT073 / ATCC 700928 / UPEC).